Here is a 316-residue protein sequence, read N- to C-terminus: Bifunctional riboflavin kinase/FMN adenylyltransferase (316 aa).

This sequence belongs to the RibF family.

The enzyme catalyses riboflavin + ATP = FMN + ADP + H(+). It catalyses the reaction FMN + ATP + H(+) = FAD + diphosphate. It participates in cofactor biosynthesis; FAD biosynthesis; FAD from FMN: step 1/1. The protein operates within cofactor biosynthesis; FMN biosynthesis; FMN from riboflavin (ATP route): step 1/1. Catalyzes the phosphorylation of riboflavin to FMN followed by the adenylation of FMN to FAD. This Bacillus subtilis (strain 168) protein is Bifunctional riboflavin kinase/FMN adenylyltransferase (ribC).